Reading from the N-terminus, the 443-residue chain is Glutamyl-tRNA reductase (443 aa).

Substrate contacts are provided by residues 49–52, Ser-109, 114–116, and Gln-120; these read TCNR and ETQ. Cys-50 acts as the Nucleophile in catalysis. 189-194 serves as a coordination point for NADP(+); that stretch reads GAGDMS.

It belongs to the glutamyl-tRNA reductase family. Homodimer.

The catalysed reaction is (S)-4-amino-5-oxopentanoate + tRNA(Glu) + NADP(+) = L-glutamyl-tRNA(Glu) + NADPH + H(+). It functions in the pathway porphyrin-containing compound metabolism; protoporphyrin-IX biosynthesis; 5-aminolevulinate from L-glutamyl-tRNA(Glu): step 1/2. Functionally, catalyzes the NADPH-dependent reduction of glutamyl-tRNA(Glu) to glutamate 1-semialdehyde (GSA). The polypeptide is Glutamyl-tRNA reductase (Staphylococcus saprophyticus subsp. saprophyticus (strain ATCC 15305 / DSM 20229 / NCIMB 8711 / NCTC 7292 / S-41)).